A 218-amino-acid chain; its full sequence is Ribose-5-phosphate isomerase A (218 aa).

Substrate is bound by residues Lys-7, 28-31 (TGST), 81-84 (DGAD), and 94-97 (KGGG). The Proton acceptor role is filled by Glu-103. Lys-121 is a substrate binding site.

It belongs to the ribose 5-phosphate isomerase family. As to quaternary structure, homodimer.

The catalysed reaction is aldehydo-D-ribose 5-phosphate = D-ribulose 5-phosphate. It participates in carbohydrate degradation; pentose phosphate pathway; D-ribose 5-phosphate from D-ribulose 5-phosphate (non-oxidative stage): step 1/1. In terms of biological role, catalyzes the reversible conversion of ribose-5-phosphate to ribulose 5-phosphate. The polypeptide is Ribose-5-phosphate isomerase A (Vibrio vulnificus (strain YJ016)).